The following is a 466-amino-acid chain: Putative multidrug resistance protein MdtD (466 aa).

Transmembrane regions (helical) follow at residues 11–31 (LWIV…VNTA), 48–68 (SVIV…GWLA), 71–91 (IGVK…SLLC), 105–125 (VIQG…VMKI), 137–157 (FVTL…GFLV), 164–184 (WIFL…WFLM), 194–214 (FDIS…LALD), 218–238 (SLGI…IALL), 262–282 (FSIG…LPFM), 292–312 (GFSP…SMGI), 328–347 (VLVA…ALVA), 351–370 (WIWM…AIRF), 402–422 (SLGV…HIAA), and 429–449 (TVFL…ALIF).

It belongs to the major facilitator superfamily. TCR/Tet family.

The protein localises to the cell inner membrane. The chain is Putative multidrug resistance protein MdtD from Pectobacterium atrosepticum (strain SCRI 1043 / ATCC BAA-672) (Erwinia carotovora subsp. atroseptica).